The primary structure comprises 807 residues: Probable dimethyl sulfoxide reductase chain YnfF (807 aa).

A signal peptide (tat-type signal) is located at residues 1–45 (MKIHTTEALMKAEISRRSLMKTSALGSLALASSAFTLPFSQMVRA). In terms of domain architecture, 4Fe-4S Mo/W bis-MGD-type spans 52 to 113 (EKAVWSSCTV…SIRRRMNHPD (62 aa)). Residues cysteine 59, cysteine 63, cysteine 67, and cysteine 99 each coordinate [4Fe-4S] cluster. Position 195 (serine 195) interacts with Mo-bis(molybdopterin guanine dinucleotide).

Belongs to the prokaryotic molybdopterin-containing oxidoreductase family. As to quaternary structure, the complex consists of three subunits: YnfF, the reductase; YnfG, an electron transfer protein, and YnfH, a membrane anchor protein. The cofactor is [4Fe-4S] cluster. Mo-bis(molybdopterin guanine dinucleotide) is required as a cofactor. Post-translationally, exported by the Tat system. The position of the signal peptide cleavage has not been experimentally proven. Can also be exported by the Sec system.

The protein resides in the cell membrane. In terms of biological role, terminal reductase during anaerobic growth on various sulfoxide and N-oxide compounds. The sequence is that of Probable dimethyl sulfoxide reductase chain YnfF (ynfF) from Escherichia coli (strain K12).